Reading from the N-terminus, the 459-residue chain is Putrescine aminotransferase (459 aa).

Residues 150–151 (GT) and glutamine 274 each bind pyridoxal 5'-phosphate. Position 300 is an N6-(pyridoxal phosphate)lysine (lysine 300). Position 332 (threonine 332) interacts with pyridoxal 5'-phosphate.

The protein belongs to the class-III pyridoxal-phosphate-dependent aminotransferase family. Putrescine aminotransferase subfamily. Pyridoxal 5'-phosphate serves as cofactor.

It catalyses the reaction an alkane-alpha,omega-diamine + 2-oxoglutarate = an omega-aminoaldehyde + L-glutamate. The catalysed reaction is putrescine + 2-oxoglutarate = 1-pyrroline + L-glutamate + H2O. It carries out the reaction cadaverine + 2-oxoglutarate = 5-aminopentanal + L-glutamate. It functions in the pathway amine and polyamine degradation; putrescine degradation; 4-aminobutanal from putrescine (transaminase route): step 1/1. Functionally, catalyzes the aminotransferase reaction from putrescine to 2-oxoglutarate, leading to glutamate and 4-aminobutanal, which spontaneously cyclizes to form 1-pyrroline. This is the first step in one of two pathways for putrescine degradation, where putrescine is converted into 4-aminobutanoate (gamma-aminobutyrate or GABA) via 4-aminobutanal. Also functions as a cadaverine transaminase in a a L-lysine degradation pathway to succinate that proceeds via cadaverine, glutarate and L-2-hydroxyglutarate. The chain is Putrescine aminotransferase from Salmonella paratyphi B (strain ATCC BAA-1250 / SPB7).